The following is a 290-amino-acid chain: Acetylglutamate kinase (290 aa).

Substrate contacts are provided by residues 64–65 (GG), Arg86, and Asn183.

This sequence belongs to the acetylglutamate kinase family. ArgB subfamily.

It is found in the cytoplasm. It catalyses the reaction N-acetyl-L-glutamate + ATP = N-acetyl-L-glutamyl 5-phosphate + ADP. It participates in amino-acid biosynthesis; L-arginine biosynthesis; N(2)-acetyl-L-ornithine from L-glutamate: step 2/4. In terms of biological role, catalyzes the ATP-dependent phosphorylation of N-acetyl-L-glutamate. The protein is Acetylglutamate kinase of Halothermothrix orenii (strain H 168 / OCM 544 / DSM 9562).